Consider the following 833-residue polypeptide: Protein MCM10 homolog (833 aa).

The tract at residues 1–122 (MTEEENLDML…AVQRQSTKSL (122 aa)) is N-terminal domain. The span at 18-64 (EGQDLESPAAEEGEDNLDDLFDEDDDGEQYIEPEEAEEEKEEEEEEV) shows a compositional bias: acidic residues. The segment at 18–208 (EGQDLESPAA…TPPTVRQPTP (191 aa)) is disordered. A coiled-coil region spans residues 70 to 108 (SSSDLNKSKEDLEAELKLMQEKMQKLQQQLEASQKTTPA). Residues 75–93 (NKSKEDLEAELKLMQEKMQ) are compositionally biased toward basic and acidic residues. 2 stretches are compositionally biased toward polar residues: residues 115–126 (QRQSTKSLTSPQ) and 165–179 (SERQ…NQPQ). An OB-fold domain region spans residues 202-360 (TVRQPTPRLP…IIGEAMDFGT (159 aa)). Positions 361-386 (CKAKKKNGDSCTQLVNLYECQFCQYH) are zinc finger-like 1. Composition is skewed to low complexity over residues 502–516 (SSAV…VSAS) and 571–583 (SEGP…SLSG). A disordered region spans residues 502–589 (SSAVAGSSVQ…SLSGPAVPTL (88 aa)). Zinc finger-like regions lie at residues 741–760 (CKTC…EEKH) and 774–794 (CPCG…CSHC).

This sequence belongs to the MCM10 family. In terms of assembly, self-associates.

The protein resides in the nucleus. In terms of biological role, acts as a replication initiation factor that brings together the MCM2-7 helicase and the DNA polymerase alpha/primase complex in order to initiate DNA replication. Additionally, plays a role in preventing DNA damage during replication. The chain is Protein MCM10 homolog (mcm10) from Danio rerio (Zebrafish).